The sequence spans 153 residues: uncharacterized protein (153 aa).

This is an uncharacterized protein from Alkalihalophilus pseudofirmus (strain ATCC BAA-2126 / JCM 17055 / OF4) (Bacillus pseudofirmus).